Reading from the N-terminus, the 560-residue chain is MFS-type transporter pgmG (560 aa).

A disordered region spans residues 1 to 32 (MSETVTQTETDQRPATARSLGAEEKEAKSDEQ). Positions 21–31 (GAEEKEAKSDE) are enriched in basic and acidic residues. 8 helical membrane-spanning segments follow: residues 45–65 (FIVI…NTIV), 84–104 (WLSV…SKIY), 111–131 (WLYL…GAAP), 141–161 (ALAG…LSVN), 174–194 (TGLT…GFAV), 201–221 (WSFY…LFML), 242–262 (LGTI…NFGG), and 275–295 (CFVV…YCIG). Asn300 carries an N-linked (GlcNAc...) asparagine glycan. Residues 313–333 (FIILFVQTASVATVFFVPIYF) form a helical membrane-spanning segment. N-linked (GlcNAc...) asparagine glycosylation is present at Asn343. Transmembrane regions (helical) follow at residues 346–366 (AIDA…AMIL), 378–398 (MPWY…MYTI), 409–429 (GYMI…FAVA), 440–460 (VATG…LAIA), and 515–535 (ISQV…LAIF).

The protein belongs to the major facilitator superfamily. TCR/Tet family.

The protein resides in the membrane. MFS-type transporter; part of the gene cluster that mediates the biosynthesis of pleosporalin A, ascomycone A, as well as a third cryptic naphthoquinone derived pigment, all responsible for the coloration of conidia. Seems not to be involved in pigment biosynthesis although its expression is regulated by the cluster-specific transcription factor pgmR. In Aspergillus terreus, this protein is MFS-type transporter pgmG.